The sequence spans 625 residues: Isocitrate dehydrogenase kinase/phosphatase (625 aa).

ATP-binding positions include 325–331 (APGIKGM) and K346. D381 is a catalytic residue. A disordered region spans residues 596–625 (RRHSPGRNDHELLTHLPPEPMLTGLSGMTP).

It belongs to the AceK family.

It localises to the cytoplasm. It catalyses the reaction L-seryl-[isocitrate dehydrogenase] + ATP = O-phospho-L-seryl-[isocitrate dehydrogenase] + ADP + H(+). In terms of biological role, bifunctional enzyme which can phosphorylate or dephosphorylate isocitrate dehydrogenase (IDH) on a specific serine residue. This is a regulatory mechanism which enables bacteria to bypass the Krebs cycle via the glyoxylate shunt in response to the source of carbon. When bacteria are grown on glucose, IDH is fully active and unphosphorylated, but when grown on acetate or ethanol, the activity of IDH declines drastically concomitant with its phosphorylation. This is Isocitrate dehydrogenase kinase/phosphatase from Polaromonas sp. (strain JS666 / ATCC BAA-500).